A 321-amino-acid chain; its full sequence is 4-dihydromethyl-trisporate dehydrogenase (321 aa).

Y51 acts as the Proton donor in catalysis. A substrate-binding site is contributed by H113.

Belongs to the aldo/keto reductase family.

It participates in pheromone biosynthesis; trisporate biosynthesis. Its function is as follows. Catalyzes the NADP-dependent oxidation of (+) mating-type specific precursor 4-dihydromethyl-trisporate to methyl-trisporate. The sequence is that of 4-dihydromethyl-trisporate dehydrogenase (tdh) from Mucor mucedo (Common pinmould).